The following is a 507-amino-acid chain: Heat shock 70 kDa protein 14-B (507 aa).

The protein belongs to the heat shock protein 70 family. As to quaternary structure, component of ribosome-associated complex (RAC).

The protein localises to the cytoplasm. It is found in the cytosol. Component of the ribosome-associated complex (RAC), a complex involved in folding or maintaining nascent polypeptides in a folding-competent state. The chain is Heat shock 70 kDa protein 14-B (hspa14-b) from Xenopus laevis (African clawed frog).